A 406-amino-acid chain; its full sequence is B3 domain-containing protein Os11g0197600 (406 aa).

The segment at 1-20 (MVVREKQGGRMGKGKGKGKE) is disordered. The segment at residues 30–123 (RSFFRVLLTL…QFSVTVFEPS (94 aa)) is a DNA-binding region (TF-B3 1). A disordered region spans residues 199 to 245 (ESSRRKRAGASAGKSKVTSTSHNSTRGSSCSSDEDNSSSKSPNPPFL). Polar residues predominate over residues 214–225 (KVTSTSHNSTRG). The segment at residues 298 to 393 (AVQIMMESYV…NIKVHIYRVV (96 aa)) is a DNA-binding region (TF-B3 2).

It is found in the nucleus. This Oryza sativa subsp. japonica (Rice) protein is B3 domain-containing protein Os11g0197600.